The chain runs to 352 residues: Fatty acid synthase (352 aa).

Positions methionine 1–leucine 352 constitute a Ketosynthase family 3 (KS3) domain. Catalysis depends on for beta-ketoacyl synthase activity residues cysteine 161, histidine 293, and histidine 331.

As to quaternary structure, homodimer which monomers are arranged in a head to tail fashion.

The enzyme catalyses acetyl-CoA + n malonyl-CoA + 2n NADPH + 2n H(+) = a long-chain fatty acid + (n+1) CoA + n CO2 + 2n NADP(+).. Its function is as follows. Fatty acid synthetase catalyzes the formation of long-chain fatty acids from acetyl-CoA, malonyl-CoA and NADPH. This multifunctional protein has 7 catalytic activities as an acyl carrier protein. The sequence is that of Fatty acid synthase (FASN) from Anser anser anser (Western greylag goose).